Reading from the N-terminus, the 1071-residue chain is MILRKKIELFVLPEFTEIQFEGFHRFIKYGLVKELNDFPKIEDTDQEFEFQLFSRQYQLAEPPIEERDAIYQSITYSSDLYVPAQLTERKKGRVKKQIVFLGSIPLMNSQGTFVVNGVARVIINQILRSPGIYYNSELDRNGIPIYTGTIISDWGRRLKLEIDGKTRIWARISKKRKVSILVLLLAMGLDIEEILGNVCYPKLLLGCMKRKTKKEHLQSTEDAIVELYKQIYCIGGDLNFSESISKELQKKFFQQRCELGKIGRLNLNKKLNLDVPENENFLLPQDLLAAVDYLIKIRFGIGVPDDIDHLKNRRVRSVTDLLQDQLKLALNRLENSIRQAIRGANRREHLPTPKSLVTSTPLITTFKEFFGSHPLSQFLDQTNPLTEVVHKRRLSSLGPGGLTRRTASFQVRDIHPSHYGRICPIETSEGMNAGLVASLAIHAKVDNWGSLESPFYKISGVSEEEDMTFLSAGEDENYHIATGNCLALNQTNQEEQVTPARYRQEFVATAWNQINLRSIFPLQYFSIGTSLIPFLEHNDANRALMGFNMQRQAVPLSKPEKCIVGTGLESQTALDSGSVIVATEGGRISYTDGRRITLLTKEKEVETKLVIYQRSNNSTCIHEKPRIQLREYVKKGQILADGRATAGGELALGKNILVAYMPWEGYNFEDAILISERLIHEDIYTSIHIERYEIEARVTSQGPERITREIPHLDNYLLRHLDESGLVLPGSWVETGDVLVGKLTPQETEESLRAPEGKLLQAIFGIQVVTAKETCLKVPLGGRGRVIDIKWIYQEKTSTTYAEIVHVYILQKREIQVGDKVAGRHGNKGIISKILPRQDMPYLQDGTPVDMVLSPLGVPSRMNVGQIFECLLGLAGDFLQKHYRVTPFDERYEREASRKLVFSELHEASRQTANPWLFESDNPGKSGLLDGRTGDIFEEPVTIGKAYMLKLIHQVDDKIHARSSGPYALVTQQPLRGKSRRGGQRVGEMEVWALEGFGAAYTLEEMLTIKSDHIQARFEVLRAIVTGELIPKPETAPESFRLLVRELRSLALNLDHIIVSEKELRIKFKDI.

Belongs to the RNA polymerase beta chain family. In plastids the minimal PEP RNA polymerase catalytic core is composed of four subunits: alpha, beta, beta', and beta''. When a (nuclear-encoded) sigma factor is associated with the core the holoenzyme is formed, which can initiate transcription.

It is found in the plastid. Its subcellular location is the chloroplast. The enzyme catalyses RNA(n) + a ribonucleoside 5'-triphosphate = RNA(n+1) + diphosphate. In terms of biological role, DNA-dependent RNA polymerase catalyzes the transcription of DNA into RNA using the four ribonucleoside triphosphates as substrates. The polypeptide is DNA-directed RNA polymerase subunit beta (Anthoceros angustus (Hornwort)).